A 273-amino-acid chain; its full sequence is Gamma-glutamyl cyclotransferase gliK (273 aa).

Residues 227–243 (WLGWIILTLYGLMWSYH) traverse the membrane as a helical segment.

Belongs to the class-I pyridoxal-phosphate-dependent aminotransferase family.

It is found in the membrane. The catalysed reaction is an alpha-(gamma-L-glutamyl)-L-amino acid = 5-oxo-L-proline + an L-alpha-amino acid. It functions in the pathway mycotoxin biosynthesis. In terms of biological role, gamma-glutamyl cyclotransferase-like protein; part of the gene cluster that mediates the biosynthesis of gliotoxin, a member of the epipolythiodioxopiperazine (ETP) class of toxins characterized by a disulfide bridged cyclic dipeptide. The first step in gliotoxin biosynthesis is the condensation of serine and phenylalanine to form the cyclo-L-phenylalanyl-L-serine diketopiperazine (DKP) by the NRPS gliP. GliP is also able to produce the DKP cyclo-L-tryptophanyl-L-serine, suggesting that the substrate specificity of the first adenylation (A) domain in gliP is sufficiently relaxed to accommodate both L-Phe and L-Trp. The cytochrome P450 monooxygenase gliC has been shown to catalyze the subsequent hydroxylation of the alpha-carbon of L-Phe in cyclo-L-phenylalanyl-L-serine whereas the second cytochrome P450 enzyme, gliF, is presumably involved in the modification of the DKP side chain. The glutathione S-transferase (GST) gliG then forms a bis-glutathionylated biosynthetic intermediate which is responsible for the sulfurization of gliotoxin. This bis-glutathionylated intermediate is subsequently processed by the gamma-glutamyl cyclotransferase gliK to remove both gamma-glutamyl moieties. Subsequent processing via gliI yields a biosynthetic intermediate, which is N-methylated via the N-methyltransferase gliN, before the gliotoxin oxidoreductase gliT-mediated disulfide bridge closure. GliN-mediated amide methylation confers stability to ETP, damping the spontaneous formation of tri- and tetrasulfides. Intracellular dithiol gliotoxin oxidized by gliT is subsequently effluxed by gliA. Gliotoxin contributes to pathogenesis during invasive aspergillosis. In macrophages and neutrophils, gliotoxin showed inhibition of various different cell functions including cytokine production, antigen presentation, phagocytosis, and production of reactive oxygen species. This chain is Gamma-glutamyl cyclotransferase gliK, found in Aspergillus fumigatus (strain ATCC MYA-4609 / CBS 101355 / FGSC A1100 / Af293) (Neosartorya fumigata).